The chain runs to 323 residues: L-lactate dehydrogenase (323 aa).

NAD(+) is bound by residues Val-12, Asp-33, and Tyr-65. Residues Arg-94 and 126-129 each bind substrate; that span reads NPCD. Residue Thr-149 coordinates NAD(+). 154 to 157 is a substrate binding site; that stretch reads ETMR. His-181 serves as the catalytic Proton acceptor. Thr-234 is a binding site for substrate.

It belongs to the LDH/MDH superfamily. LDH family. As to quaternary structure, homotetramer.

The protein resides in the cytoplasm. The catalysed reaction is (S)-lactate + NAD(+) = pyruvate + NADH + H(+). The protein operates within fermentation; pyruvate fermentation to lactate; (S)-lactate from pyruvate: step 1/1. Catalyzes the conversion of lactate to pyruvate. The protein is L-lactate dehydrogenase of Mycoplasmoides gallisepticum (strain R(low / passage 15 / clone 2)) (Mycoplasma gallisepticum).